A 337-amino-acid polypeptide reads, in one-letter code: WRKY transcription factor 23 (337 aa).

Residues 100-160 are disordered; the sequence is INPPATPNSS…KNNQKRQREA (61 aa). A compositionally biased stretch (low complexity) spans 106–118; sequence PNSSSISSASSEA. The span at 142 to 155 shows a compositional bias: basic residues; sequence HTKKQLKAKKNNQK. Residues 168–233 constitute a DNA-binding region (WRKY); that stretch reads SEVDHLEDGY…YEGQHTHISP (66 aa).

Belongs to the WRKY group II-c family.

The protein resides in the nucleus. In terms of biological role, transcription factor. Interacts specifically with the W box (5'-(T)TGAC[CT]-3'), a frequently occurring elicitor-responsive cis-acting element. The protein is WRKY transcription factor 23 (WRKY23) of Arabidopsis thaliana (Mouse-ear cress).